The sequence spans 384 residues: tRNA-specific 2-thiouridylase MnmA (384 aa).

Residues 21 to 28 (GMSGGVDS) and methionine 47 each bind ATP. The interaction with target base in tRNA stretch occupies residues 107–109 (NPD). Cysteine 112 functions as the Nucleophile in the catalytic mechanism. Cysteine 112 and cysteine 208 are disulfide-bonded. Glycine 136 provides a ligand contact to ATP. The segment at 158 to 160 (KDQ) is interaction with tRNA. The active-site Cysteine persulfide intermediate is the cysteine 208. Residues 320-321 (RY) form an interaction with tRNA region.

Belongs to the MnmA/TRMU family.

The protein resides in the cytoplasm. The catalysed reaction is S-sulfanyl-L-cysteinyl-[protein] + uridine(34) in tRNA + AH2 + ATP = 2-thiouridine(34) in tRNA + L-cysteinyl-[protein] + A + AMP + diphosphate + H(+). Functionally, catalyzes the 2-thiolation of uridine at the wobble position (U34) of tRNA, leading to the formation of s(2)U34. The polypeptide is tRNA-specific 2-thiouridylase MnmA (Chromohalobacter salexigens (strain ATCC BAA-138 / DSM 3043 / CIP 106854 / NCIMB 13768 / 1H11)).